A 131-amino-acid chain; its full sequence is Small ribosomal subunit protein uS8 (131 aa).

It belongs to the universal ribosomal protein uS8 family. In terms of assembly, part of the 30S ribosomal subunit. Contacts proteins S5 and S12.

Functionally, one of the primary rRNA binding proteins, it binds directly to 16S rRNA central domain where it helps coordinate assembly of the platform of the 30S subunit. This chain is Small ribosomal subunit protein uS8, found in Bacteroides fragilis (strain ATCC 25285 / DSM 2151 / CCUG 4856 / JCM 11019 / LMG 10263 / NCTC 9343 / Onslow / VPI 2553 / EN-2).